The following is a 934-amino-acid chain: MSAHDLKLEEIVNAETLRRKLNELADTADESYTSLPMRKVVLQTLKDALASGRANAEDMLMKDGGGTLCAKRLCYLMDTLIDILFEFATTRAYPTRNPSKAENMALVAVGGYGRGGLAQGSDIDLLFLLPYKQTPWGEQVVEYTLYMLWDMGLKVGHSTRNIDECIRLAREDMTIRTALLDARFLTGDKDLFRTLEIRFEEEIVKGTEPEFIQAKLAERDARHRKAGETRYLVEPNVKEGKGGQRDLHTLFWITKYFYRVKTKEELVKLGVLSRAELKLFNKAEDFLWAVRCHMHFATLKAEERLSFDIQPEIAQRLGYTAHPGQNYVERFMKHYFLVAKDVGDLTRIICAALEEQQAKHVPGFNRIFLTFSRRKRKLSDDGAFISENHRINIARPDIFRQDPVNMIRLFHLADRHGLEFHPEAMQSLTRSLKLINADLRENPEANRLFLEILTSPRNPELILRRMNESGVLGKFIPDFGKIVAMMQFNMYHHYTVDEHLLRCIAVLSEIEHGELKTEHPLSNHLITTIKRDRNLLYVTLLLHDIAKGRPEDHSIAGARIARRLCPRFGLTPSETETVEWLVREHLTMSMVAQSRDLNDRKTIIDFADTVQTMERLKLLLILTVCDIKAVGPGIWNGWKGQLLRTLFYETELVLTGGFSELSRAARDKQAREALAERLSDWPKEERDAYLALPYTNYFLTVSLDDQVRHAHFIRDADQQGRALVTMAKPHAFEAVTEITVLAPDHPRLLSVITGACAAAGGNIVDAQIFTTSDGRALDTILISREFDTDDDERRRAERVGKVIEDVLSGKAHLPDMLAKRTKPKKAARAFKVEPRVEINNTLSNKFTVIEVEGLDRPGLLSELTGLISDLSLDIASAHITTFGEKVIDSFYVTDLVGHKISNATRQGNIKRKLLALLGAENGARTNGRSPQAAA.

The uridylyltransferase stretch occupies residues 1 to 379; sequence MSAHDLKLEE…TFSRRKRKLS (379 aa). The tract at residues 380 to 736 is uridylyl-removing; sequence DDGAFISENH…AKPHAFEAVT (357 aa). Positions 496–613 constitute an HD domain; it reads VDEHLLRCIA…IDFADTVQTM (118 aa). ACT domains are found at residues 737–818 and 848–931; these read EITV…DMLA and VIEV…RSPQ.

It belongs to the GlnD family. Mg(2+) is required as a cofactor.

It catalyses the reaction [protein-PII]-L-tyrosine + UTP = [protein-PII]-uridylyl-L-tyrosine + diphosphate. The enzyme catalyses [protein-PII]-uridylyl-L-tyrosine + H2O = [protein-PII]-L-tyrosine + UMP + H(+). Its activity is regulated as follows. Uridylyltransferase (UTase) activity is inhibited by glutamine, while glutamine activates uridylyl-removing (UR) activity. Modifies, by uridylylation and deuridylylation, the PII regulatory proteins (GlnB and homologs), in response to the nitrogen status of the cell that GlnD senses through the glutamine level. Under low glutamine levels, catalyzes the conversion of the PII proteins and UTP to PII-UMP and PPi, while under higher glutamine levels, GlnD hydrolyzes PII-UMP to PII and UMP (deuridylylation). Thus, controls uridylylation state and activity of the PII proteins, and plays an important role in the regulation of nitrogen assimilation and metabolism. The protein is Bifunctional uridylyltransferase/uridylyl-removing enzyme of Brucella abortus (strain S19).